The sequence spans 299 residues: Oxygen-dependent coproporphyrinogen-III oxidase (299 aa).

Serine 92 serves as a coordination point for substrate. Residues histidine 96 and histidine 106 each contribute to the a divalent metal cation site. Histidine 106 serves as the catalytic Proton donor. Substrate is bound at residue asparagine 108–arginine 110. A divalent metal cation-binding residues include histidine 145 and histidine 175. The segment at tyrosine 239 to glutamate 274 is important for dimerization. Glycine 257–arginine 259 is a substrate binding site.

It belongs to the aerobic coproporphyrinogen-III oxidase family. Homodimer. Requires a divalent metal cation as cofactor.

It localises to the cytoplasm. The catalysed reaction is coproporphyrinogen III + O2 + 2 H(+) = protoporphyrinogen IX + 2 CO2 + 2 H2O. Its pathway is porphyrin-containing compound metabolism; protoporphyrin-IX biosynthesis; protoporphyrinogen-IX from coproporphyrinogen-III (O2 route): step 1/1. Involved in the heme biosynthesis. Catalyzes the aerobic oxidative decarboxylation of propionate groups of rings A and B of coproporphyrinogen-III to yield the vinyl groups in protoporphyrinogen-IX. This chain is Oxygen-dependent coproporphyrinogen-III oxidase, found in Xanthomonas campestris pv. campestris (strain B100).